The chain runs to 2025 residues: MATGGGPFEEVMHDQDLPNWSNDSVDDRLNNMEWGGQQKKANRSSEKNKKKFGVASDKRVTNAISPESSPGVGRRRTKIPHTFPHSRYMTQMSVPEQAELEKLKQRINFSDLDQRSIGSDSQGRATAANNKRQLSENRKPFNFLPMQINTNKSKDATASLPKREMTTSAQCKELFASALSNDLLQNCQVSEEDGRGEPAMESSQIVSRLVQIRDYITKASSMREDLVEKNERSANVERLTHLIEHLKEQEKSYMKFLQKILARDPQQEPMEETENLKKQHDLLKRMLQQQEQLRALQGRQAALLALQHKAEQAIAVMDDSVVTETTGSLSGVSITSELNEELNDLIQRFHNQLRDSQPPAVPDNRRQAESLSLTREISQSRNPSVSEHLPDEKVQLFSKMRVLQEKKQKMDKLLGELHNLRDQHLNNSSFVPSTSLQRSGDKRSSTVALSAPVGFASAVNGEANSLISSVPCPATSLVSQNESENEGHLNPAEKLQKLNEVQKRLNELRELVHYYEQTSDMMTDAVNENTKDEETEESEYDSEHENSEPVTNIRNPQVASTWNEVNTNSNTQCGSNNRDGRPVNSNCEINNRSAANIRALNMPPLDCRYNREGEQRLHVAHGEDEEEEVEEEGVSGASLSSRRSSLVDEAPEDEEFEQKISRLMAAKEKLKQLQDLVAMVQDDDATQVVVPAASNLDDFYAAEEDIKQNSNNARENSNKIDTGVNEKTREKFYEAKLQQQQRELKQLQEERKKLIEIQEKIQAVQKACPDLQLSATSISSGPTKKYLPAITSTPTVNENDSSTSKCVIDPEDSSVVDNELWSDMRRHEMLREELRQRRKQLEALMAEHQRRQGLAETSSPVAISLRSDGSENLCTPQQSRTEKTMATWGGSTQCALDEEGDEDGYLSEGIVRTDEEEEEEQDASSNDNFPIYPPSMNQNSYNVKETKTRWKSNRPVSADGNYRPLAKTRQQNISMQRQENLRWVSELSYIEEKEQWQEQINQLKKQLDFSVNICQTLMQDQQTLSCLLQTLLTGPYSVLPSNVASPQVHLIMHQLNQCYTQLTWQQNNVQRLKQMLTELMRQQNQHPEKPRSKERGSSASHPSSPNLFCPFSFPTQPVNLFNLPGFTNFPSFAPGMNFSPLFPSNFGDFSQNVSTPTEQQQPLAQNPSGKTEYMAFPKPFESSSSLGAEKQRNQKQPEEEAENTKTPWLYDQEGGVEKPFFKTGFTESVEKATNSNRKNQPDTSRRRRQFDEESLESFSSMPDPIDPTTVTKTFKTRKASAQASLASKDKTPKSKSKKRNSTQLKSRVKNIGYESASVSSTCEPCKNRNRHSAQTEEPVQAKLFSRKNHEQLEKIIKYSRSAEISSETGSDFSMFEALRDTIYSEVATLISQNESRPHFLIELFHELQLLNTDYLRQRALYALQDIVSRHISESDEREGENVKPVNSGTWVASNSELTPSESLVTTDDETFEKNFERETHKVSEQNDADNVSVMSVSSNFEPFATDDLGNTVIHLDQALARMREYERMKTETESHSNMRCTCRVIEDEDGAAAAATVSNSEETPIIENHNSPQPISDVSAVPCPRIDTQQLDRQIKAIMKEVIPFLKEHMDEVCSSQLLTSVRRMVLTLTQQNDESKEFVKFFHKQLGSILQDSLAKFAGRKLKDCGEDLLVEISEVLFNELAFFKLMQDLDNNSIAVKQRCKRKIEAAGVRQSYAKEAKRILEGDHGSPAGEIDDEDKDKDETETVKQTQTSEVYDAKGPKNVRSDVSDQEEDEESERCPVSINLSKAESQALTNYGSGEDENEDEEMEDFEESPVDIQTSLQANTETTEENEHDSQILQHDLEKTPESTNVPSDQEPTSKNDQDSSPVKPCYLNILENEQQLNSATHKDSLTTTDSSKQPEPLPLPLAASETLVPRVKEVKSAQETPESSLAGSPDTESPVLVNDYEAESGNISQKSDEEDFVKVEDLPLKLTVYSEEELRKKMIEEEQKNHLSGEICEMQTEELAGNSQILKEPETVGAQSI.

The interval 1–91 (MATGGGPFEE…TFPHSRYMTQ (91 aa)) is disordered. Alanine 2 is subject to N-acetylalanine. The segment at 2-1458 (ATGGGPFEEV…TWVASNSELT (1457 aa)) is mediates interaction with DZIP1. Serine 65, serine 68, serine 69, serine 93, serine 110, serine 116, serine 119, and serine 159 each carry phosphoserine. A disordered region spans residues 111–140 (DLDQRSIGSDSQGRATAANNKRQLSENRKP). Residues 116–132 (SIGSDSQGRATAANNKR) are compositionally biased toward polar residues. Residues 218-301 (KASSMREDLV…QLRALQGRQA (84 aa)) adopt a coiled-coil conformation. The segment at 354-390 (RDSQPPAVPDNRRQAESLSLTREISQSRNPSVSEHLP) is disordered. Residues 369–385 (ESLSLTREISQSRNPSV) show a composition bias toward polar residues. Serine 370 carries the post-translational modification Phosphoserine. Serine 372 is modified (phosphoserine; by PLK4). Phosphoserine is present on serine 384. At lysine 399 the chain carries N6-acetyllysine. Coiled coils occupy residues 399-426 (KMRV…QHLN) and 492-518 (AEKL…YEQT). Disordered regions lie at residues 528 to 553 (ENTK…VTNI) and 565 to 586 (VNTN…VNSN). Residues 531 to 540 (KDEETEESEY) show a composition bias toward acidic residues. Serine 593 bears the Phosphoserine mark. The tract at residues 620–654 (AHGEDEEEEVEEEGVSGASLSSRRSSLVDEAPEDE) is disordered. Acidic residues predominate over residues 623 to 633 (EDEEEEVEEEG). The segment covering 634–644 (VSGASLSSRRS) has biased composition (low complexity). The residue at position 644 (serine 644) is a Phosphoserine. Coiled coils occupy residues 652-772 (EDEE…PDLQ) and 822-856 (SDMR…GLAE). Threonine 857 is modified (phosphothreonine). Residues serine 859, serine 864, serine 867, and serine 870 each carry the phosphoserine modification. Disordered regions lie at residues 866–885 (RSDG…EKTM) and 913–940 (TDEE…NQNS). The span at 870 to 879 (SENLCTPQQS) shows a compositional bias: polar residues. Phosphothreonine is present on threonine 875. A phosphoserine mark is found at serine 957, serine 974, serine 985, and serine 988. Coiled-coil stretches lie at residues 985–1017 (SELS…CQTL) and 1061–1086 (QLTW…QNQH). Disordered stretches follow at residues 1081-1105 (RQQN…PSSP) and 1149-1213 (FSQN…YDQE). Over residues 1086-1096 (HPEKPRSKERG) the composition is skewed to basic and acidic residues. The segment covering 1149-1169 (FSQNVSTPTEQQQPLAQNPSG) has biased composition (polar residues). Residues serine 1182 and serine 1185 each carry the phosphoserine modification. The span at 1189 to 1198 (EKQRNQKQPE) shows a compositional bias: basic and acidic residues. A phosphoserine mark is found at serine 1228, serine 1254, serine 1257, serine 1259, and serine 1260. The tract at residues 1230–1310 (EKATNSNRKN…STQLKSRVKN (81 aa)) is disordered. A compositionally biased stretch (polar residues) spans 1268–1285 (TTVTKTFKTRKASAQASL). Phosphoserine is present on residues serine 1315 and serine 1317. The tract at residues 1319-1338 (SSTCEPCKNRNRHSAQTEEP) is disordered. Threonine 1466 carries the post-translational modification Phosphothreonine. Phosphoserine is present on residues serine 1571, serine 1695, serine 1729, serine 1766, serine 1769, serine 1777, and serine 1783. A disordered region spans residues 1720 to 1943 (KRILEGDHGS…AGSPDTESPV (224 aa)). Positions 1756 to 1768 (YDAKGPKNVRSDV) are enriched in basic and acidic residues. Over residues 1784 to 1798 (INLSKAESQALTNYG) the composition is skewed to polar residues. The segment covering 1800–1816 (GEDENEDEEMEDFEESP) has biased composition (acidic residues). Composition is skewed to polar residues over residues 1818–1828 (DIQTSLQANTE), 1849–1858 (ESTNVPSDQE), 1879–1901 (ENEQ…SSKQ), and 1925–1934 (AQETPESSLA). 2 positions are modified to phosphoserine: serine 1959 and serine 1978.

This sequence belongs to the PCM1 family. Self-associates. Interacts with BBS4, BBS8, CETN3, HAP1, NDE1, NDEL1, MAP1LC3B, GABARAPAL2, and GABARAP. Interacts with CEP131; the interaction increases in response to ultraviolet light (UV) radiation. Associates with microtubule; association to microtubule is reduced in response to cellular stress, such as ultraviolet light (UV) radiation or heat shock, in a process that requires p38 MAP kinase signaling. Interacts with C2CD3. Interacts with CFAP263. Interacts with SSX2IP. Interacts with CCDC13. Interacts with CEP290. Interacts with PARD6A. Interacts with KIAA0753/OFIP, CEP20/FOR20 and OFD1; the interaction with CEP20/FOR20 and OFD1 may be mediated by KIAA0753/OFIP. Interacts with CCDC66. Interacts with CCDC61. Interacts with DZIP1; localizes DZIP1 and the associated BBSome to centriolar satellite. Interacts with CSTPP1, TTLL1, TPGS1 and LRRC49. Interacts with CFAP53. Post-translationally, ubiquitinated. Undergoes monoubiquitination catalyzed by the E3 ubiquitin-protein ligase MIB1 in proliferating cells, preventing cilia formation. Monoubiquitination by MIB1 is inhibited in response to cellular stress, such as ultraviolet light (UV) radiation or heat shock, resulting in cilia formation initiation. Phosphorylated on multiple serine and threonine residues by DYRK3 during the G2-to-M transition, after the nuclear-envelope breakdown. Phosphorylation by DYRK3 promotes disassembly of pericentriolar material. Phosphorylation at Ser-372 mediated by PLK4 is required to maintain the integrity of centriolar satellites. As to expression, expressed in the hippocampus and dentate gyrus, the columnar epithelial cells of bronchioles, the olfactory epithelium, the pericardium and the inner segment of the retina.

Its subcellular location is the cytoplasm. The protein resides in the cytoskeleton. It is found in the microtubule organizing center. It localises to the centrosome. The protein localises to the cytoplasmic granule. Its subcellular location is the centriolar satellite. The protein resides in the cilium basal body. Its function is as follows. Required for centrosome assembly and function. Essential for the correct localization of several centrosomal proteins including CEP250, CETN3, PCNT and NEK2. Required to anchor microtubules to the centrosome. Also involved in cilium biogenesis by recruiting the BBSome, a ciliary protein complex involved in cilium biogenesis, to the centriolar satellites. Recruits the tubulin polyglutamylase complex (TPGC) to centriolar satellites. This Mus musculus (Mouse) protein is Pericentriolar material 1 protein.